The following is a 485-amino-acid chain: Alpha,alpha-trehalose-phosphate synthase [UDP-forming] (485 aa).

D-glucose 6-phosphate contacts are provided by Tyr99 and Asp153. Positions 290 and 295 each coordinate UDP. The UDP-alpha-D-glucose site is built by Arg290 and Lys295. Position 328 (Arg328) interacts with D-glucose 6-phosphate. UDP contacts are provided by residues Ile367 and 393–397; that span reads LVSYE. Residues Ile367 and 389 to 397 each bind UDP-alpha-D-glucose; that span reads DGMNLVSYE.

It belongs to the glycosyltransferase 20 family.

It carries out the reaction D-glucose 6-phosphate + UDP-alpha-D-glucose = alpha,alpha-trehalose 6-phosphate + UDP + H(+). Its pathway is carbohydrate biosynthesis. Synthase catalytic subunit of the trehalose synthase complex that catalyzes the production of trehalose from glucose-6-phosphate and UDP-alpha-D-glucose in a two step process. The protein is Alpha,alpha-trehalose-phosphate synthase [UDP-forming] of Zygosaccharomyces rouxii.